The sequence spans 589 residues: Muscarinic acetylcholine receptor M3 (589 aa).

The Extracellular portion of the chain corresponds to 1–66; sequence MTLHSNSTTS…DPLGGHTIWQ (66 aa). Asn-6, Asn-15, Asn-41, Asn-48, and Asn-52 each carry an N-linked (GlcNAc...) asparagine glycan. Residues 67 to 90 form a helical membrane-spanning segment; that stretch reads VVFIAFLTGFLALVTIIGNILVIV. Over 91–103 the chain is Cytoplasmic; sequence AFKVNKQLKTVNN. A helical transmembrane segment spans residues 104–129; that stretch reads YFLLSLACADLIIGVISMNLFTTYII. Topologically, residues 130-141 are extracellular; the sequence is MNRWALGNLACD. A disulfide bridge links Cys-140 with Cys-220. The chain crosses the membrane as a helical span at residues 142-163; sequence LWLSIDYVASNASVMNLLVISF. The Cytoplasmic segment spans residues 164 to 183; it reads DRYFSITRPLTYRAKRTTKR. The helical transmembrane segment at 184-205 threads the bilayer; that stretch reads AGVMIGLAWVISFVLWAPAILF. Over 206–228 the chain is Extracellular; sequence WQYFVGKRTVPPGECFIQFLSEP. The chain crosses the membrane as a helical span at residues 229-251; sequence TITFGTAIAAFYMPVTIMTILYW. The Cytoplasmic segment spans residues 252–490; it reads RIYKETEKRT…SLIKEKKAAQ (239 aa). The Basolateral sorting signal signature appears at 274 to 280; the sequence is AEAENFV. The segment at 323–356 is disordered; that stretch reads AEQMDQDHSSSDSWNNNDAAASLENSASSDEEDI. Over residues 333-344 the composition is skewed to low complexity; that stretch reads SDSWNNNDAAAS. The residue at position 384 (Ser-384) is a Phosphoserine. A helical transmembrane segment spans residues 491 to 513; the sequence is TLSAILLAFIITWTPYNIMVLVN. The Extracellular portion of the chain corresponds to 514 to 525; the sequence is TFCDSCIPKTYW. An intrachain disulfide couples Cys-516 to Cys-519. A helical transmembrane segment spans residues 526 to 545; sequence NLGYWLCYINSTVNPVCYAL. Over 546 to 589 the chain is Cytoplasmic; sequence CNKTFRTTFKTLLLCQCDKRKRRKQQYQQRQSVIFHKRVPEQAL.

This sequence belongs to the G-protein coupled receptor 1 family. Muscarinic acetylcholine receptor subfamily. CHRM3 sub-subfamily. Homodimer; the dimers can form tetramers. Interacts with NALCN. Interacts with TMEM147.

The protein resides in the cell membrane. It is found in the postsynaptic cell membrane. The protein localises to the basolateral cell membrane. It localises to the endoplasmic reticulum membrane. In terms of biological role, the muscarinic acetylcholine receptor mediates various cellular responses, including inhibition of adenylate cyclase, breakdown of phosphoinositides and modulation of potassium channels through the action of G proteins. Primary transducing effect is Pi turnover. The polypeptide is Muscarinic acetylcholine receptor M3 (Chrm3) (Rattus norvegicus (Rat)).